Here is a 723-residue protein sequence, read N- to C-terminus: Catalase-peroxidase (723 aa).

Positions 96-224 (WHAAGSYRVA…LAAVMMGLIY (129 aa)) form a cross-link, tryptophyl-tyrosyl-methioninium (Trp-Tyr) (with M-250). His97 (proton acceptor) is an active-site residue. The tryptophyl-tyrosyl-methioninium (Tyr-Met) (with W-96) cross-link spans 224–250 (YVNPEGVDGQPDPLKTAQDVRVTFARM). Residue His265 coordinates heme b.

It belongs to the peroxidase family. Peroxidase/catalase subfamily. In terms of assembly, homodimer or homotetramer. The cofactor is heme b. In terms of processing, formation of the three residue Trp-Tyr-Met cross-link is important for the catalase, but not the peroxidase activity of the enzyme.

It catalyses the reaction H2O2 + AH2 = A + 2 H2O. It carries out the reaction 2 H2O2 = O2 + 2 H2O. Its function is as follows. Bifunctional enzyme with both catalase and broad-spectrum peroxidase activity. The chain is Catalase-peroxidase from Leptothrix cholodnii (strain ATCC 51168 / LMG 8142 / SP-6) (Leptothrix discophora (strain SP-6)).